We begin with the raw amino-acid sequence, 335 residues long: UDP-3-O-acylglucosamine N-acyltransferase (335 aa).

The active-site Proton acceptor is His225.

It belongs to the transferase hexapeptide repeat family. LpxD subfamily. Homotrimer.

It catalyses the reaction a UDP-3-O-[(3R)-3-hydroxyacyl]-alpha-D-glucosamine + a (3R)-hydroxyacyl-[ACP] = a UDP-2-N,3-O-bis[(3R)-3-hydroxyacyl]-alpha-D-glucosamine + holo-[ACP] + H(+). Its pathway is bacterial outer membrane biogenesis; LPS lipid A biosynthesis. Catalyzes the N-acylation of UDP-3-O-acylglucosamine using 3-hydroxyacyl-ACP as the acyl donor. Is involved in the biosynthesis of lipid A, a phosphorylated glycolipid that anchors the lipopolysaccharide to the outer membrane of the cell. The chain is UDP-3-O-acylglucosamine N-acyltransferase from Delftia acidovorans (strain DSM 14801 / SPH-1).